Consider the following 541-residue polypeptide: Glutamyl-tRNA(Gln) amidotransferase subunit B, mitochondrial (541 aa).

This sequence belongs to the GatB/GatE family. GatB subfamily. Subunit of the heterotrimeric GatFAB amidotransferase (AdT) complex, composed of A, B and F subunits.

The protein resides in the mitochondrion. The catalysed reaction is L-glutamyl-tRNA(Gln) + L-glutamine + ATP + H2O = L-glutaminyl-tRNA(Gln) + L-glutamate + ADP + phosphate + H(+). Its function is as follows. Allows the formation of correctly charged Gln-tRNA(Gln) through the transamidation of misacylated Glu-tRNA(Gln) in the mitochondria. The reaction takes place in the presence of glutamine and ATP through an activated gamma-phospho-Glu-tRNA(Gln). The chain is Glutamyl-tRNA(Gln) amidotransferase subunit B, mitochondrial from Saccharomyces cerevisiae (strain RM11-1a) (Baker's yeast).